Consider the following 300-residue polypeptide: Tyrosine recombinase XerC (300 aa).

A Core-binding (CB) domain is found at threonine 2–leucine 88. Residues arginine 109–methionine 294 form the Tyr recombinase domain. Residues arginine 150, lysine 174, histidine 246, arginine 249, and histidine 272 contribute to the active site. Catalysis depends on tyrosine 281, which acts as the O-(3'-phospho-DNA)-tyrosine intermediate.

It belongs to the 'phage' integrase family. XerC subfamily. As to quaternary structure, forms a cyclic heterotetrameric complex composed of two molecules of XerC and two molecules of XerD.

It localises to the cytoplasm. Site-specific tyrosine recombinase, which acts by catalyzing the cutting and rejoining of the recombining DNA molecules. The XerC-XerD complex is essential to convert dimers of the bacterial chromosome into monomers to permit their segregation at cell division. It also contributes to the segregational stability of plasmids. The polypeptide is Tyrosine recombinase XerC (Listeria welshimeri serovar 6b (strain ATCC 35897 / DSM 20650 / CCUG 15529 / CIP 8149 / NCTC 11857 / SLCC 5334 / V8)).